Consider the following 375-residue polypeptide: DNA replication and repair protein RecF (375 aa).

30–37 (GDNAQGKT) is an ATP binding site.

Belongs to the RecF family.

The protein resides in the cytoplasm. Functionally, the RecF protein is involved in DNA metabolism; it is required for DNA replication and normal SOS inducibility. RecF binds preferentially to single-stranded, linear DNA. It also seems to bind ATP. In Symbiobacterium thermophilum (strain DSM 24528 / JCM 14929 / IAM 14863 / T), this protein is DNA replication and repair protein RecF.